The sequence spans 207 residues: Small ribosomal subunit protein uS4 (207 aa).

Residues 26–47 (AINNKNYKPGQQGNSSSISKPS) form a disordered region. The span at 28–39 (NNKNYKPGQQGN) shows a compositional bias: polar residues. The 64-residue stretch at 95–158 (RRLDAVVYRL…KQIPIVIGAI (64 aa)) folds into the S4 RNA-binding domain.

This sequence belongs to the universal ribosomal protein uS4 family. As to quaternary structure, part of the 30S ribosomal subunit. Contacts protein S5. The interaction surface between S4 and S5 is involved in control of translational fidelity.

Its function is as follows. One of the primary rRNA binding proteins, it binds directly to 16S rRNA where it nucleates assembly of the body of the 30S subunit. Functionally, with S5 and S12 plays an important role in translational accuracy. This Orientia tsutsugamushi (strain Boryong) (Rickettsia tsutsugamushi) protein is Small ribosomal subunit protein uS4.